The sequence spans 436 residues: Acetylcholine receptor non-alpha chain (436 aa).

The Extracellular segment spans residues 1 to 195; it reads IIDVHEIDQI…IFYLELRRKP (195 aa). The N-linked (GlcNAc...) asparagine glycan is linked to asparagine 62. A disulfide bond links cysteine 89 and cysteine 103. Residue asparagine 140 is glycosylated (N-linked (GlcNAc...) asparagine). The next 3 membrane-spanning stretches (helical) occupy residues 196-219, 227-245, and 261-280; these read LFYT…AFYL, VTLC…LLLK, and YLLF…VISL. The Cytoplasmic portion of the chain corresponds to 281 to 404; it reads NLHFRRPSTH…WKFVARVLDR (124 aa). Residues 405–423 traverse the membrane as a helical segment; that stretch reads LFLLLFSIACFLGTILILF.

This sequence belongs to the ligand-gated ion channel (TC 1.A.9) family. Acetylcholine receptor (TC 1.A.9.1) subfamily.

It localises to the postsynaptic cell membrane. Its subcellular location is the cell membrane. Its function is as follows. After binding acetylcholine, the AChR responds by an extensive change in conformation that affects all subunits and leads to opening of an ion-conducting channel across the plasma membrane. The polypeptide is Acetylcholine receptor non-alpha chain (Onchocerca volvulus).